Reading from the N-terminus, the 133-residue chain is Large ribosomal subunit protein uL14 (133 aa).

This sequence belongs to the universal ribosomal protein uL14 family. Part of the 50S ribosomal subunit. Forms a cluster with proteins L3 and L24e, part of which may contact the 16S rRNA in 2 intersubunit bridges.

Functionally, binds to 23S rRNA. Forms part of two intersubunit bridges in the 70S ribosome. The sequence is that of Large ribosomal subunit protein uL14 from Methanopyrus kandleri (strain AV19 / DSM 6324 / JCM 9639 / NBRC 100938).